The primary structure comprises 130 residues: MKQVNFCGTGRRKTAVARVILTNGTGKITINTKNFETYLPQPTTRLDMLQPLIISEKKDVYDVRVNVNGGGLCAQAGAIRLGIARALLESIPELRPVLKKAGLLTRDARCVERKKYGLKKARRAPQFSKR.

The protein belongs to the universal ribosomal protein uS9 family.

This Phytoplasma australiense protein is Small ribosomal subunit protein uS9.